We begin with the raw amino-acid sequence, 225 residues long: Insulin-induced gene 2 protein (225 aa).

The Cytoplasmic segment spans residues M1–V28. Residues V29 to I51 form a helical membrane-spanning segment. The Lumenal portion of the chain corresponds to Q52–A70. A helical transmembrane segment spans residues W71 to Y88. The Cytoplasmic segment spans residues P89–R103. A helical membrane pass occupies residues E104–D126. At F127 to N129 the chain is on the lumenal side. The chain crosses the membrane as a helical span at residues N130 to F148. Over D149–S153 the chain is Cytoplasmic. Residue S151 is modified to Phosphoserine. A helical transmembrane segment spans residues G154–N175. At G176–R189 the chain is on the lumenal side. A helical transmembrane segment spans residues S190–G207. At R208–E225 the chain is on the cytoplasmic side. Cysteine sulfenic acid (-SOH); alternate is present on C215. A Glycyl cysteine thioester (Cys-Gly) (interchain with G-Cter in ubiquitin); alternate cross-link involves residue C215. The KxHxx motif lies at A219 to E225.

This sequence belongs to the INSIG family. As to quaternary structure, interacts with SCAP; interaction is direct and only takes place in the presence of sterols; it prevents interaction between SCAP and the coat protein complex II (COPII). Associates with the SCAP-SREBP complex (composed of SCAP and SREBF1/SREBP1 or SREBF2/SREBP2); association is mediated via its interaction with SCAP and only takes place in the presence of sterols. Interacts with RNF139. Interacts with RNF145. Post-translationally, phosphorylation at Ser-151 by PCK1 reduces binding to oxysterol, disrupting the interaction between INSIG2 and SCAP, thereby promoting nuclear translocation of SREBP proteins (SREBF1/SREBP1 or SREBF2/SREBP2) and subsequent transcription of downstream lipogenesis-related genes. Polyubiquitinated by AMFR/gp78 at Cys-215 in some tissues such as adipose tissues, undifferentiated myoblasts and liver, leading to its degradation. In differentiated myotubes, Cys-215 oxidation prevents ubiquitination at the same site, resulting in protein stabilization. In terms of processing, oxidized at Cys-215 in differentiated myotubes, preventing ubiquitination at the same site, and resulting in protein stabilization.

The protein localises to the endoplasmic reticulum membrane. Oxysterol-binding protein that mediates feedback control of cholesterol synthesis by controlling both endoplasmic reticulum to Golgi transport of SCAP and degradation of HMGCR. Acts as a negative regulator of cholesterol biosynthesis by mediating the retention of the SCAP-SREBP complex in the endoplasmic reticulum, thereby blocking the processing of sterol regulatory element-binding proteins (SREBPs) SREBF1/SREBP1 and SREBF2/SREBP2. Binds oxysterol, including 22-hydroxycholesterol, 24-hydroxycholesterol, 25-hydroxycholesterol and 27-hydroxycholesterol, regulating interaction with SCAP and retention of the SCAP-SREBP complex in the endoplasmic reticulum. In presence of oxysterol, interacts with SCAP, retaining the SCAP-SREBP complex in the endoplasmic reticulum, thereby preventing SCAP from escorting SREBF1/SREBP1 and SREBF2/SREBP2 to the Golgi. Sterol deprivation or phosphorylation by PCK1 reduce oxysterol-binding, disrupting the interaction between INSIG2 and SCAP, thereby promoting Golgi transport of the SCAP-SREBP complex, followed by processing and nuclear translocation of SREBF1/SREBP1 and SREBF2/SREBP2. Also regulates cholesterol synthesis by regulating degradation of HMGCR: initiates the sterol-mediated ubiquitin-mediated endoplasmic reticulum-associated degradation (ERAD) of HMGCR via recruitment of the reductase to the ubiquitin ligase RNF139. The chain is Insulin-induced gene 2 protein from Rattus norvegicus (Rat).